Consider the following 159-residue polypeptide: Phosphopantetheine adenylyltransferase (159 aa).

Residue Ser9 participates in substrate binding. Residues 9-10 (SF) and His17 contribute to the ATP site. Substrate is bound by residues Lys41, Leu73, and Lys87. ATP-binding positions include 88-90 (GLR), Glu98, and 122-128 (YSFLSSS).

Belongs to the bacterial CoaD family. Homohexamer. The cofactor is Mg(2+).

The protein localises to the cytoplasm. The catalysed reaction is (R)-4'-phosphopantetheine + ATP + H(+) = 3'-dephospho-CoA + diphosphate. It functions in the pathway cofactor biosynthesis; coenzyme A biosynthesis; CoA from (R)-pantothenate: step 4/5. Its function is as follows. Reversibly transfers an adenylyl group from ATP to 4'-phosphopantetheine, yielding dephospho-CoA (dPCoA) and pyrophosphate. This Streptomyces coelicolor (strain ATCC BAA-471 / A3(2) / M145) protein is Phosphopantetheine adenylyltransferase.